The sequence spans 71 residues: Small ribosomal subunit protein bS21 (71 aa).

It belongs to the bacterial ribosomal protein bS21 family.

The polypeptide is Small ribosomal subunit protein bS21 (Alteromonas mediterranea (strain DSM 17117 / CIP 110805 / LMG 28347 / Deep ecotype)).